The primary structure comprises 258 residues: Tryptophan synthase alpha chain (258 aa).

Catalysis depends on proton acceptor residues glutamate 52 and aspartate 63.

Belongs to the TrpA family. In terms of assembly, tetramer of two alpha and two beta chains.

It catalyses the reaction (1S,2R)-1-C-(indol-3-yl)glycerol 3-phosphate + L-serine = D-glyceraldehyde 3-phosphate + L-tryptophan + H2O. Its pathway is amino-acid biosynthesis; L-tryptophan biosynthesis; L-tryptophan from chorismate: step 5/5. In terms of biological role, the alpha subunit is responsible for the aldol cleavage of indoleglycerol phosphate to indole and glyceraldehyde 3-phosphate. The chain is Tryptophan synthase alpha chain from Streptococcus pneumoniae (strain Taiwan19F-14).